Here is a 75-residue protein sequence, read N- to C-terminus: Cytochrome c oxidase subunit 6C (75 aa).

Over 1-13 (MASSALAKPQMRG) the chain is Mitochondrial matrix. Residues 14–54 (LLARRLRIHIVGAFVVSLGVAAFYKYAVAEPRKKAYADFYR) traverse the membrane as a helical segment. Over 55 to 75 (NYDSVKYFEEMRKAGVFQSVK) the chain is Mitochondrial intermembrane.

This sequence belongs to the cytochrome c oxidase subunit 6c family. In terms of assembly, component of the cytochrome c oxidase (complex IV, CIV), a multisubunit enzyme composed of 14 subunits. The complex is composed of a catalytic core of 3 subunits MT-CO1, MT-CO2 and MT-CO3, encoded in the mitochondrial DNA, and 11 supernumerary subunits COX4I, COX5A, COX5B, COX6A, COX6B, COX6C, COX7A, COX7B, COX7C, COX8 and NDUFA4, which are encoded in the nuclear genome. The complex exists as a monomer or a dimer and forms supercomplexes (SCs) in the inner mitochondrial membrane with NADH-ubiquinone oxidoreductase (complex I, CI) and ubiquinol-cytochrome c oxidoreductase (cytochrome b-c1 complex, complex III, CIII), resulting in different assemblies (supercomplex SCI(1)III(2)IV(1) and megacomplex MCI(2)III(2)IV(2)).

The protein resides in the mitochondrion inner membrane. The protein operates within energy metabolism; oxidative phosphorylation. In terms of biological role, component of the cytochrome c oxidase, the last enzyme in the mitochondrial electron transport chain which drives oxidative phosphorylation. The respiratory chain contains 3 multisubunit complexes succinate dehydrogenase (complex II, CII), ubiquinol-cytochrome c oxidoreductase (cytochrome b-c1 complex, complex III, CIII) and cytochrome c oxidase (complex IV, CIV), that cooperate to transfer electrons derived from NADH and succinate to molecular oxygen, creating an electrochemical gradient over the inner membrane that drives transmembrane transport and the ATP synthase. Cytochrome c oxidase is the component of the respiratory chain that catalyzes the reduction of oxygen to water. Electrons originating from reduced cytochrome c in the intermembrane space (IMS) are transferred via the dinuclear copper A center (CU(A)) of subunit 2 and heme A of subunit 1 to the active site in subunit 1, a binuclear center (BNC) formed by heme A3 and copper B (CU(B)). The BNC reduces molecular oxygen to 2 water molecules using 4 electrons from cytochrome c in the IMS and 4 protons from the mitochondrial matrix. This Nycticebus coucang (Slow loris) protein is Cytochrome c oxidase subunit 6C (COX6C).